Reading from the N-terminus, the 314-residue chain is DNA-directed RNA polymerase subunit alpha (314 aa).

Positions 1-228 (MIEIEKPRIE…EHLNIFVDLT (228 aa)) are alpha N-terminal domain (alpha-NTD). The segment at 245–314 (KEKVLEMSIE…DLGLGLRKED (70 aa)) is alpha C-terminal domain (alpha-CTD).

The protein belongs to the RNA polymerase alpha chain family. As to quaternary structure, homodimer. The RNAP catalytic core consists of 2 alpha, 1 beta, 1 beta' and 1 omega subunit. When a sigma factor is associated with the core the holoenzyme is formed, which can initiate transcription.

The enzyme catalyses RNA(n) + a ribonucleoside 5'-triphosphate = RNA(n+1) + diphosphate. In terms of biological role, DNA-dependent RNA polymerase catalyzes the transcription of DNA into RNA using the four ribonucleoside triphosphates as substrates. This Macrococcus caseolyticus (strain JCSC5402) (Macrococcoides caseolyticum) protein is DNA-directed RNA polymerase subunit alpha.